The chain runs to 324 residues: Glyceraldehyde-3-phosphate dehydrogenase 1 (324 aa).

Residues 13–14 (RI), aspartate 35, and lysine 85 each bind NAD(+). D-glyceraldehyde 3-phosphate-binding positions include 157–159 (SCT), threonine 188, 217–218 (TG), and arginine 240. The active-site Nucleophile is the cysteine 158. NAD(+) is bound at residue asparagine 322.

The protein belongs to the glyceraldehyde-3-phosphate dehydrogenase family. Homotetramer.

It localises to the cytoplasm. It catalyses the reaction D-glyceraldehyde 3-phosphate + phosphate + NAD(+) = (2R)-3-phospho-glyceroyl phosphate + NADH + H(+). It participates in carbohydrate degradation; glycolysis; pyruvate from D-glyceraldehyde 3-phosphate: step 1/5. This chain is Glyceraldehyde-3-phosphate dehydrogenase 1 (GPD-1), found in Globodera rostochiensis (Golden nematode worm).